Here is a 132-residue protein sequence, read N- to C-terminus: Small ribosomal subunit protein eS12 (132 aa).

The residue at position 2 (Ala-2) is an N-acetylalanine. At Lys-129 the chain carries N6-succinyllysine.

Belongs to the eukaryotic ribosomal protein eS12 family. In terms of assembly, part of the small subunit (SSU) processome, composed of more than 70 proteins and the RNA chaperone small nucleolar RNA (snoRNA) U3. Subunit of the 40S ribosomal complex.

The protein resides in the nucleus. It is found in the nucleolus. In terms of biological role, part of the small subunit (SSU) processome, first precursor of the small eukaryotic ribosomal subunit. During the assembly of the SSU processome in the nucleolus, many ribosome biogenesis factors, an RNA chaperone and ribosomal proteins associate with the nascent pre-rRNA and work in concert to generate RNA folding, modifications, rearrangements and cleavage as well as targeted degradation of pre-ribosomal RNA by the RNA exosome. Subunit of the 40S ribosomal complex. In Mus musculus (Mouse), this protein is Small ribosomal subunit protein eS12 (Rps12).